Consider the following 600-residue polypeptide: Sulfite reductase [NADPH] flavoprotein alpha-component (600 aa).

One can recognise a Flavodoxin-like domain in the interval 63 to 201; it reads ITLISASQTG…AAQAWRQRVV (139 aa). Residues 69–74, 116–119, and 152–161 contribute to the FMN site; these read SQTGNA, STQG, and LGDTSYEHFC. In terms of domain architecture, FAD-binding FR-type spans 235-449; sequence ESPLTATLSV…IEHNDNFRLP (215 aa). Residues Thr-323, Ala-357, 387–390, 405–407, and 420–423 each bind FAD; these read RLYS, TVG, and GGAS. NADP(+)-binding positions include 520-521, 526-530, and Asp-562; these read SR and KIYVQ. Tyr-600 lines the FAD pocket.

This sequence belongs to the NADPH-dependent sulphite reductase flavoprotein subunit CysJ family. It in the N-terminal section; belongs to the flavodoxin family. The protein in the C-terminal section; belongs to the flavoprotein pyridine nucleotide cytochrome reductase family. In terms of assembly, alpha(8)-beta(8). The alpha component is a flavoprotein, the beta component is a hemoprotein. FAD serves as cofactor. The cofactor is FMN.

It catalyses the reaction hydrogen sulfide + 3 NADP(+) + 3 H2O = sulfite + 3 NADPH + 4 H(+). The protein operates within sulfur metabolism; hydrogen sulfide biosynthesis; hydrogen sulfide from sulfite (NADPH route): step 1/1. Component of the sulfite reductase complex that catalyzes the 6-electron reduction of sulfite to sulfide. This is one of several activities required for the biosynthesis of L-cysteine from sulfate. The flavoprotein component catalyzes the electron flow from NADPH -&gt; FAD -&gt; FMN to the hemoprotein component. This chain is Sulfite reductase [NADPH] flavoprotein alpha-component, found in Cronobacter sakazakii (strain ATCC BAA-894) (Enterobacter sakazakii).